We begin with the raw amino-acid sequence, 83 residues long: MASEVRGLRKTKIGVVVSSKMDKTVVVRVERIYSHPQYAKVVRDSRKFYAHDGLGVSEGDKVKIQETRPLSKLKRWRVVERVS.

The protein belongs to the universal ribosomal protein uS17 family. As to quaternary structure, part of the 30S ribosomal subunit.

Its function is as follows. One of the primary rRNA binding proteins, it binds specifically to the 5'-end of 16S ribosomal RNA. The chain is Small ribosomal subunit protein uS17 from Chlamydia abortus (strain DSM 27085 / S26/3) (Chlamydophila abortus).